A 968-amino-acid chain; its full sequence is RNA polymerase-associated protein RapA (968 aa).

One can recognise a Helicase ATP-binding domain in the interval 164–334 (DVGRRHAPRV…FARLRLLDPN (171 aa)). 177–184 (DEVGLGKT) contacts ATP. A DEAH box motif is present at residues 280–283 (DEAH). The Helicase C-terminal domain maps to 490 to 662 (RVEWLMGYLT…YLASPDQTEG (173 aa)).

Belongs to the SNF2/RAD54 helicase family. RapA subfamily. In terms of assembly, interacts with the RNAP. Has a higher affinity for the core RNAP than for the holoenzyme. Its ATPase activity is stimulated by binding to RNAP.

Its function is as follows. Transcription regulator that activates transcription by stimulating RNA polymerase (RNAP) recycling in case of stress conditions such as supercoiled DNA or high salt concentrations. Probably acts by releasing the RNAP, when it is trapped or immobilized on tightly supercoiled DNA. Does not activate transcription on linear DNA. Probably not involved in DNA repair. In Escherichia coli (strain 55989 / EAEC), this protein is RNA polymerase-associated protein RapA.